A 551-amino-acid polypeptide reads, in one-letter code: Probable NADH-ubiquinone oxidoreductase C947.15c, mitochondrial (551 aa).

A mitochondrion-targeting transit peptide spans 1–35; sequence MSVSKARLQSVVRLSRTVPYSKTMVRSFHVSCAVK. 92-122 lines the FAD pocket; the sequence is NIVVLGSGWGAVAAIKNLDPSLYNITLVSPR. NAD(+) is bound at residue 255-291; the sequence is LHITVVGGGPTGMEFAAEMQDFIDNDVKDMFPELQKD.

It belongs to the NADH dehydrogenase family.

It localises to the mitochondrion. The enzyme catalyses a quinone + NADH + H(+) = a quinol + NAD(+). The catalysed reaction is a ubiquinone + NADH + H(+) = a ubiquinol + NAD(+). Its function is as follows. Catalyzes the oxidation of NADH. The polypeptide is Probable NADH-ubiquinone oxidoreductase C947.15c, mitochondrial (Schizosaccharomyces pombe (strain 972 / ATCC 24843) (Fission yeast)).